The sequence spans 204 residues: Gellan lyase (204 aa).

As to quaternary structure, multimer.

Its subcellular location is the secreted. It catalyses the reaction Eliminative cleavage of beta-D-glucopyranosyl-(1-&gt;4)-beta-D-glucopyranosyluronate bonds of gellan backbone releasing tetrasaccharides containing a 4-deoxy-4,5-unsaturated D-glucopyranosyluronic acid at the non-reducing end. The tetrasaccharide produced from deacetylated gellan is beta-D-4-deoxy-Delta(4)-GlcAp-(1-&gt;4)-beta-D-Glcp-(1-&gt;4)-alpha-L-Rhap-(1-&gt;3)-beta-D-Glcp.. Activity is stimulated by zinc, potassium, lithium, cobalt, sodium, calcium, iron, manganase, magnesium and mercury ions at a concentration of 1 mM, but inhibited by copper ions at a concentration of 1 mM. Activity is inhibited by potassium, sodium and magnesium ions at a concentration of 1 M. Activity is inhibited by urea, EDTA, dithiothreitol, p-CMB, PSF, natrium lauryl sulfate and N-bromosuccinimide. Functionally, cleaves the glycosidic bonds of gellan backbone and releases tetrasaccharide units of glucuronyl-glucosyl-rhamnosyl-glucose with unsaturated glucuronic acid at the non-reducing terminal. The enzyme is highly specific to the heteropolysaccharide gellan. This Geobacillus stearothermophilus (Bacillus stearothermophilus) protein is Gellan lyase.